A 390-amino-acid polypeptide reads, in one-letter code: 23S rRNA (uracil(747)-C(5))-methyltransferase RlmC (390 aa).

4 residues coordinate [4Fe-4S] cluster: cysteine 12, cysteine 20, cysteine 23, and cysteine 100. Residues glutamine 225, phenylalanine 254, glutamate 275, and asparagine 322 each coordinate S-adenosyl-L-methionine. Cysteine 349 functions as the Nucleophile in the catalytic mechanism.

This sequence belongs to the class I-like SAM-binding methyltransferase superfamily. RNA M5U methyltransferase family. RlmC subfamily.

It catalyses the reaction uridine(747) in 23S rRNA + S-adenosyl-L-methionine = 5-methyluridine(747) in 23S rRNA + S-adenosyl-L-homocysteine + H(+). Its function is as follows. Catalyzes the formation of 5-methyl-uridine at position 747 (m5U747) in 23S rRNA. The protein is 23S rRNA (uracil(747)-C(5))-methyltransferase RlmC of Shewanella baltica (strain OS223).